A 328-amino-acid chain; its full sequence is scyllo-inositol 2-dehydrogenase (NADP(+)) IolU (328 aa).

The protein belongs to the Gfo/Idh/MocA family.

It catalyses the reaction scyllo-inositol + NADP(+) = scyllo-inosose + NADPH + H(+). In terms of biological role, catalyzes the NADPH-dependent reduction of scyllo-inosose (SIS) to scyllo-inositol (SI) in vitro, but is unable to dehydrogenate scyllo-inositol and myo-inositol. Is less efficient than the functional paralog IolW. Under physiological conditions, may primarily function as an NADPH-dependent oxidoreductase that reduces carbonyl group(s) in its substrates. Cannot use NADH instead of NADPH. The sequence is that of scyllo-inositol 2-dehydrogenase (NADP(+)) IolU from Bacillus subtilis (strain 168).